A 195-amino-acid polypeptide reads, in one-letter code: Imidazoleglycerol-phosphate dehydratase (195 aa).

It belongs to the imidazoleglycerol-phosphate dehydratase family.

It localises to the cytoplasm. It catalyses the reaction D-erythro-1-(imidazol-4-yl)glycerol 3-phosphate = 3-(imidazol-4-yl)-2-oxopropyl phosphate + H2O. It functions in the pathway amino-acid biosynthesis; L-histidine biosynthesis; L-histidine from 5-phospho-alpha-D-ribose 1-diphosphate: step 6/9. This is Imidazoleglycerol-phosphate dehydratase from Hydrogenovibrio crunogenus (strain DSM 25203 / XCL-2) (Thiomicrospira crunogena).